The primary structure comprises 427 residues: Histidinol dehydrogenase (427 aa).

3 residues coordinate substrate: serine 232, glutamine 254, and histidine 257. Zn(2+)-binding residues include glutamine 254 and histidine 257. Active-site proton acceptor residues include glutamate 322 and histidine 323. 4 residues coordinate substrate: histidine 323, aspartate 356, glutamate 410, and histidine 415. Aspartate 356 is a Zn(2+) binding site. Histidine 415 contributes to the Zn(2+) binding site.

This sequence belongs to the histidinol dehydrogenase family. Zn(2+) is required as a cofactor.

The catalysed reaction is L-histidinol + 2 NAD(+) + H2O = L-histidine + 2 NADH + 3 H(+). The protein operates within amino-acid biosynthesis; L-histidine biosynthesis; L-histidine from 5-phospho-alpha-D-ribose 1-diphosphate: step 9/9. In terms of biological role, catalyzes the sequential NAD-dependent oxidations of L-histidinol to L-histidinaldehyde and then to L-histidine. In Listeria monocytogenes serotype 4b (strain F2365), this protein is Histidinol dehydrogenase.